A 129-amino-acid polypeptide reads, in one-letter code: Large ribosomal subunit protein bL21 (129 aa).

Belongs to the bacterial ribosomal protein bL21 family. As to quaternary structure, part of the 50S ribosomal subunit. Contacts protein L20.

Its function is as follows. This protein binds to 23S rRNA in the presence of protein L20. The protein is Large ribosomal subunit protein bL21 of Prochlorococcus marinus (strain MIT 9313).